Reading from the N-terminus, the 66-residue chain is Large ribosomal subunit protein uL29 (66 aa).

The protein belongs to the universal ribosomal protein uL29 family.

In Thermotoga sp. (strain RQ2), this protein is Large ribosomal subunit protein uL29.